The following is a 929-amino-acid chain: Band 4.1-like protein 3 (929 aa).

M1 bears the N-acetylmethionine mark. Positions 1–72 (MTTESGSDSE…STPVKREIGD (72 aa)) are disordered. N-acetylthreonine; in Band 4.1-like protein 3, N-terminally processed is present on T2. Low complexity predominate over residues 20–33 (QEAAGPQGQAGAQP). A Phosphoserine modification is found at S96. Residues 118–399 (MQCKVTLLDG…EHHTFFRLLL (282 aa)) form the FERM domain. The segment at 402–528 (APPKKFLTLG…PVTALRHEGK (127 aa)) is hydrophilic. Phosphoserine occurs at positions 428, 451, and 486. The segment at 490–554 (LITTVTPEKK…TESDQEEDAE (65 aa)) is disordered. T495 is subject to Phosphothreonine. Positions 496 to 516 (PEKKAEEERVEEEDRRKKAEE) are enriched in basic and acidic residues. At T518 the chain carries Phosphothreonine. Basic and acidic residues predominate over residues 523–536 (LRHEGKTDSERTDT). 2 positions are modified to phosphoserine: H525 and S543. T545 is subject to Phosphothreonine. The residue at position 547 (S547) is a Phosphoserine. Positions 559–602 (DLDKTQDELMKHQTNISELKRTFLETSTETALTNEWEKRLSTSP) are spectrin--actin-binding. 3 disordered regions span residues 608–630 (RQED…SGEK), 665–689 (LETK…STEK), and 705–807 (VHAS…SPGG). A Phosphothreonine modification is found at T725. Residues 726 to 737 (PTDRRHTGKGKE) are compositionally biased toward basic and acidic residues. A C-terminal (CTD) region spans residues 777–929 (RTSEGLEQKS…TEITPEDGED (153 aa)). Low complexity predominate over residues 789–802 (ESSTVRVESTSVGS). Residues S802 and S804 each carry the phosphoserine modification. T923 bears the Phosphothreonine mark.

Interacts (via FERM domain) with CADM1. Interacts (via FERM domain) with PRMT3; the interaction is direct and inhibits the protein-arginine N-methyltransferase activity of PRMT3. Interacts with PRMT5. Interacts with PRMT6. In terms of assembly, has the complete spectrin--actin-binding (SAB) domain and fully interacts with spectrin and actin. Detected in brain (at protein level). Highest expression in brain, lower in testis, adrenal gland, heart and kidney. Also present in muscle and epithelial cells. Isoform 1 is expressed in brain, isoform 2 is expressed in heart and isoform 3 is mostly expressed in kidney but also in heart and brain. Isoform 6 seems to be most abundant in kidney while isoform 4 and isoform 5 are predominantly expressed in heart and brain.

It is found in the cytoplasm. The protein resides in the cytoskeleton. Its subcellular location is the cell membrane. It localises to the cell junction. Functionally, tumor suppressor that inhibits cell proliferation and promotes apoptosis. Modulates the activity of protein arginine N-methyltransferases, including PRMT3 and PRMT5. The chain is Band 4.1-like protein 3 from Mus musculus (Mouse).